The following is a 90-amino-acid chain: Small ribosomal subunit protein uS17 (90 aa).

This sequence belongs to the universal ribosomal protein uS17 family. In terms of assembly, part of the 30S ribosomal subunit.

In terms of biological role, one of the primary rRNA binding proteins, it binds specifically to the 5'-end of 16S ribosomal RNA. This Treponema denticola (strain ATCC 35405 / DSM 14222 / CIP 103919 / JCM 8153 / KCTC 15104) protein is Small ribosomal subunit protein uS17.